Reading from the N-terminus, the 204-residue chain is MADKGLLLVLSGPSGVGKGTVKSAIVEHKVFPFEYSVSMTTRKPREGEVNGKDYYFVTREEFKQAIADNQLLEYNEYVGNLYGTPLGPVKEMLAAGKDVLLEIDVNGARTVRQQMPEGVFIFLTPPDLHTLRDRLEHRGTESEDVIRGRIAQARKEILVMQDYDYAVVNDTVANAVNHIKAIVDAEHVSVRRVIDDYRKMVKED.

In terms of domain architecture, Guanylate kinase-like spans 5 to 184 (GLLLVLSGPS…AVNHIKAIVD (180 aa)). 12-19 (GPSGVGKG) contributes to the ATP binding site.

The protein belongs to the guanylate kinase family.

Its subcellular location is the cytoplasm. The catalysed reaction is GMP + ATP = GDP + ADP. Essential for recycling GMP and indirectly, cGMP. The protein is Guanylate kinase of Lactobacillus delbrueckii subsp. bulgaricus (strain ATCC 11842 / DSM 20081 / BCRC 10696 / JCM 1002 / NBRC 13953 / NCIMB 11778 / NCTC 12712 / WDCM 00102 / Lb 14).